We begin with the raw amino-acid sequence, 422 residues long: 5-hydroxytryptamine receptor 1A (422 aa).

Residues 1–38 are Extracellular-facing; sequence MDVFSFGQGNNTTASQEPFGTGGNVTSISDVTFSYQVI. Asparagine 10, asparagine 11, and asparagine 24 each carry an N-linked (GlcNAc...) asparagine glycan. The helical transmembrane segment at 39 to 59 threads the bilayer; sequence TSLLLGTLIFCAVLGNACVVA. The Cytoplasmic segment spans residues 60–73; sequence AIALERSLQNVANY. A helical transmembrane segment spans residues 74–98; that stretch reads LIGSLAVTDLMVSVLVLPMAALYQV. Residues 99-107 lie on the Extracellular side of the membrane; sequence LNKWTLGQV. A helical transmembrane segment spans residues 108–132; it reads TCDLFIALDVLCCTSSILHLCAIAL. The cysteines at positions 109 and 187 are disulfide-linked. Serotonin-binding residues include aspartate 116 and cysteine 120. The DRY motif; important for ligand-induced conformation changes motif lies at 133–135; that stretch reads DRY. Residues 133–152 lie on the Cytoplasmic side of the membrane; the sequence is DRYWAITDPIDYVNKRTPRR. The helical transmembrane segment at 153-174 threads the bilayer; the sequence is AAALISLTWLIGFLISIPPMLG. Over 175–193 the chain is Extracellular; that stretch reads WRTPEDRSDPDACTISKDH. A helical transmembrane segment spans residues 194-216; it reads GYTIYSTFGAFYIPLLLMLVLYG. Residues 217-346 lie on the Cytoplasmic side of the membrane; sequence RIFRAARFRI…LARERKTVKT (130 aa). Residues 235–261 are disordered; sequence KKGAGTSLGTSSAPPPKKSLNGQPGSG. Lysine 345, threonine 346, and glycine 352 together coordinate 1D-myo-inositol 4-phosphate. The helical transmembrane segment at 347-370 threads the bilayer; that stretch reads LGIIMGTFILCWLPFFIVALVLPF. Over 371-378 the chain is Extracellular; it reads CESSCHMP. Residues 379–403 form a helical membrane-spanning segment; it reads ALLGAIINWLGYSNSLLNPVIYAYF. An NPxxY motif; important for ligand-induced conformation changes and signaling motif is present at residues 396-400; sequence NPVIY. 3 residues coordinate 1D-myo-inositol 4-phosphate: phenylalanine 403, asparagine 404, and lysine 405. Over 404–422 the chain is Cytoplasmic; that stretch reads NKDFQNAFKKIIKCKFCRR.

This sequence belongs to the G-protein coupled receptor 1 family. 5-hydroxytryptamine receptor subfamily. HTR1A sub-subfamily. Heterodimer; heterodimerizes with GPER1. Interacts with YIF1B. Interacts with GPR39 and GALR1. In terms of tissue distribution, detected in hypothalamus, mesencephalon, amygdala, medulla, thalamus, septum and hippocampus.

It localises to the cell membrane. The protein localises to the cell projection. Its subcellular location is the dendrite. Its activity is regulated as follows. G-protein coupled receptor activity is regulated by lipids: phosphatidylinositol 4-phosphate increases HTR1A-mediated activity. G-protein coupled receptor for 5-hydroxytryptamine (serotonin). Also functions as a receptor for various drugs and psychoactive substances. Ligand binding causes a conformation change that triggers signaling via guanine nucleotide-binding proteins (G proteins) and modulates the activity of downstream effectors, such as adenylate cyclase. HTR1A is coupled to G(i)/G(o) G alpha proteins and mediates inhibitory neurotransmission: signaling inhibits adenylate cyclase activity and activates a phosphatidylinositol-calcium second messenger system that regulates the release of Ca(2+) ions from intracellular stores. Beta-arrestin family members regulate signaling by mediating both receptor desensitization and resensitization processes. This chain is 5-hydroxytryptamine receptor 1A, found in Rattus norvegicus (Rat).